An 85-amino-acid chain; its full sequence is Small ribosomal subunit protein eS21 (85 aa).

This sequence belongs to the eukaryotic ribosomal protein eS21 family. Component of the 40S small ribosomal subunit.

Its subcellular location is the cytoplasm. It is found in the cytosol. It localises to the rough endoplasmic reticulum. The polypeptide is Small ribosomal subunit protein eS21 (RPS21) (Branchiostoma belcheri (Amphioxus)).